The chain runs to 460 residues: Tyrosine phenol-lyase (460 aa).

Lys260 bears the N6-(pyridoxal phosphate)lysine mark.

It belongs to the beta-eliminating lyase family. In terms of assembly, homotetramer. The cofactor is pyridoxal 5'-phosphate.

The catalysed reaction is L-tyrosine + H2O = phenol + pyruvate + NH4(+). The chain is Tyrosine phenol-lyase from Fusobacterium nucleatum subsp. nucleatum (strain ATCC 25586 / DSM 15643 / BCRC 10681 / CIP 101130 / JCM 8532 / KCTC 2640 / LMG 13131 / VPI 4355).